Here is a 120-residue protein sequence, read N- to C-terminus: Large ribosomal subunit protein uL18 (120 aa).

This sequence belongs to the universal ribosomal protein uL18 family. In terms of assembly, part of the 50S ribosomal subunit; part of the 5S rRNA/L5/L18/L25 subcomplex. Contacts the 5S and 23S rRNAs.

This is one of the proteins that bind and probably mediate the attachment of the 5S RNA into the large ribosomal subunit, where it forms part of the central protuberance. This chain is Large ribosomal subunit protein uL18, found in Staphylococcus haemolyticus (strain JCSC1435).